Consider the following 1006-residue polypeptide: Probable beta-galactosidase A (1006 aa).

Positions 1-18 are cleaved as a signal peptide; it reads MKLLSVCAIALLAAQAAG. Substrate is bound by residues Tyr96, Asn140, Ala141, and Glu142. Asn156 carries an N-linked (GlcNAc...) asparagine glycan. Asn199 is a substrate binding site. Catalysis depends on Glu200, which acts as the Proton donor. A disulfide bridge connects residues Cys205 and Cys206. Tyr260 contacts substrate. A disulfide bond links Cys266 and Cys315. Glu298 functions as the Nucleophile in the catalytic mechanism. Tyr364 contacts substrate. 7 N-linked (GlcNAc...) asparagine glycosylation sites follow: Asn373, Asn402, Asn422, Asn622, Asn760, Asn777, and Asn914.

This sequence belongs to the glycosyl hydrolase 35 family.

It localises to the secreted. The catalysed reaction is Hydrolysis of terminal non-reducing beta-D-galactose residues in beta-D-galactosides.. Functionally, cleaves beta-linked terminal galactosyl residues from gangliosides, glycoproteins, and glycosaminoglycans. The protein is Probable beta-galactosidase A (lacA) of Aspergillus fumigatus (strain ATCC MYA-4609 / CBS 101355 / FGSC A1100 / Af293) (Neosartorya fumigata).